The sequence spans 311 residues: Ribosomal RNA small subunit methyltransferase H (311 aa).

Residues 32–34, Asp52, Phe79, Asp100, and Gln107 contribute to the S-adenosyl-L-methionine site; that span reads AGH. Positions 287–311 are disordered; that stretch reads TASQEELEENNRARSAKLRIAEKRK. The span at 300–311 shows a compositional bias: basic residues; the sequence is RSAKLRIAEKRK.

This sequence belongs to the methyltransferase superfamily. RsmH family.

The protein localises to the cytoplasm. The enzyme catalyses cytidine(1402) in 16S rRNA + S-adenosyl-L-methionine = N(4)-methylcytidine(1402) in 16S rRNA + S-adenosyl-L-homocysteine + H(+). In terms of biological role, specifically methylates the N4 position of cytidine in position 1402 (C1402) of 16S rRNA. This chain is Ribosomal RNA small subunit methyltransferase H, found in Bacillus subtilis (strain 168).